Here is a 224-residue protein sequence, read N- to C-terminus: Cytidylate kinase (224 aa).

11–19 (GPAAAGKST) contributes to the ATP binding site.

This sequence belongs to the cytidylate kinase family. Type 1 subfamily.

It localises to the cytoplasm. It catalyses the reaction CMP + ATP = CDP + ADP. It carries out the reaction dCMP + ATP = dCDP + ADP. The sequence is that of Cytidylate kinase from Listeria monocytogenes serotype 4b (strain CLIP80459).